The primary structure comprises 1072 residues: MPKYKDINKVLVIGSGPIIIGQAAEFDYSGTQACKSLKEEGLQVVLVNNNPATIMTDTDIADIVYIENPTVCVVEKIIAKEKPDGILATLGGQTGLNLAVKLKEEGILDKYNVKLLGTSFESIKTAEDRKLFKRKMQEIGEPVAESVTVTNIEDALKFAKNYGYPLIIRPAYTLGGTGGGIAHNDEELISIVSLGLKKSMVGEVLVEKSLYGWKEIEFEVMRDADDNCITICSMENFDPVGVHTGDSIVVAPTQTLSDYEYQMLRSASIKIIKALKIEGGCNIQFALDPESHKYYVIEVNPRVSRSSALASKATGYPIAKVAAKIAIGLRLDEIKNPVTGKTTAFFEPALDYVVTKIPRWPFDKFYTTDRKIGTQMKATGEVMAIERSFEASLLKAVRSLEIKAYGLRLNNVKAMKTEEILKGISVPNDMRLFYIAEALRRDIDIDYINEVTKIDKWFLNKLLNIVNMEREIEKNELSEEILKKAKRMGFSDREIATIKGIEEEDVRALRKEYSIYPSYKMVDTCAAEFESVTQYIYSTYGEEDEVEIHEIPKVIVIGSGPIRIGQGIEFDYCSVKALWALRDAGIKSIIINNNPETVSTDFDTGDRLYFEPITLEDVLNIYEKEKPLGVMVMFGGQTAINLTEGLVKNGVKILGTSYESIDISEDREKFSKLLKELNINQPKGDYALTVEDAKDIALKLSFPLLVRPSYVIGGQSMEKVNTLQELIDYVKHATEISPGKPILIDKYIDGREVEIDAVSDGECVLIPGIMEHIERAGVHSGDSFSIYPARNLSEREINTIIEYTERISKALNVKGLINIQFAVKEGTVYVLEVNPRASRTVPIMSKATGVPMVKLAVEVALGKKLKELGYKSGLWPQTPYTVVKAPVFSMEKLTDAEVSLGPEMKSTGEIMGIDLSYEGALYKALEGAGLKIPKKGKILLSIAERDFQEVPSLVEKLQSLGYEIYATYRTGKYLSLMGIHVNVISLDNAIKLLKDGYFDAVINTPTKGKKPDNTGFKLRRTAVEYRIPLFTSMDTIKAALNAVAKVNVNGLSILSINEYEEIQKDNVKNLVL.

The interval 1-401 (MPKYKDINKV…SLLKAVRSLE (401 aa)) is carboxyphosphate synthetic domain. 12 residues coordinate ATP: arginine 129, arginine 169, glycine 175, glycine 176, lysine 208, leucine 210, glutamate 215, glycine 241, valine 242, histidine 243, glutamine 284, and glutamate 298. Positions 133 to 327 (KRKMQEIGEP…IAKVAAKIAI (195 aa)) constitute an ATP-grasp 1 domain. Positions 284, 298, and 300 each coordinate Mg(2+). Glutamine 284, glutamate 298, and asparagine 300 together coordinate Mn(2+). An oligomerization domain region spans residues 402 to 544 (IKAYGLRLNN…YIYSTYGEED (143 aa)). The tract at residues 545-929 (EVEIHEIPKV…ALYKALEGAG (385 aa)) is carbamoyl phosphate synthetic domain. Positions 671 to 861 (SKLLKELNIN…MVKLAVEVAL (191 aa)) constitute an ATP-grasp 2 domain. ATP-binding residues include arginine 707, lysine 746, isoleucine 748, glutamate 752, glycine 777, valine 778, histidine 779, serine 780, glutamine 820, and glutamate 832. Positions 820, 832, and 834 each coordinate Mg(2+). Mn(2+)-binding residues include glutamine 820, glutamate 832, and asparagine 834. The MGS-like domain maps to 930–1072 (LKIPKKGKIL…QKDNVKNLVL (143 aa)). The allosteric domain stretch occupies residues 930–1072 (LKIPKKGKIL…QKDNVKNLVL (143 aa)).

The protein belongs to the CarB family. Composed of two chains; the small (or glutamine) chain promotes the hydrolysis of glutamine to ammonia, which is used by the large (or ammonia) chain to synthesize carbamoyl phosphate. Tetramer of heterodimers (alpha,beta)4. Mg(2+) serves as cofactor. It depends on Mn(2+) as a cofactor.

It carries out the reaction hydrogencarbonate + L-glutamine + 2 ATP + H2O = carbamoyl phosphate + L-glutamate + 2 ADP + phosphate + 2 H(+). It catalyses the reaction hydrogencarbonate + NH4(+) + 2 ATP = carbamoyl phosphate + 2 ADP + phosphate + 2 H(+). It participates in amino-acid biosynthesis; L-arginine biosynthesis; carbamoyl phosphate from bicarbonate: step 1/1. Its pathway is pyrimidine metabolism; UMP biosynthesis via de novo pathway; (S)-dihydroorotate from bicarbonate: step 1/3. Functionally, large subunit of the glutamine-dependent carbamoyl phosphate synthetase (CPSase). CPSase catalyzes the formation of carbamoyl phosphate from the ammonia moiety of glutamine, carbonate, and phosphate donated by ATP, constituting the first step of 2 biosynthetic pathways, one leading to arginine and/or urea and the other to pyrimidine nucleotides. The large subunit (synthetase) binds the substrates ammonia (free or transferred from glutamine from the small subunit), hydrogencarbonate and ATP and carries out an ATP-coupled ligase reaction, activating hydrogencarbonate by forming carboxy phosphate which reacts with ammonia to form carbamoyl phosphate. The protein is Carbamoyl phosphate synthase large chain of Thermoanaerobacter sp. (strain X514).